A 401-amino-acid chain; its full sequence is Acetate kinase (401 aa).

A Mg(2+)-binding site is contributed by N7. K14 provides a ligand contact to ATP. A substrate-binding site is contributed by R91. The active-site Proton donor/acceptor is D148. ATP-binding positions include 208-212 (HLGNG), 283-285 (DFR), and 332-336 (GVGEN). A Mg(2+)-binding site is contributed by E385.

It belongs to the acetokinase family. In terms of assembly, homodimer. Requires Mg(2+) as cofactor. The cofactor is Mn(2+).

Its subcellular location is the cytoplasm. The catalysed reaction is acetate + ATP = acetyl phosphate + ADP. The protein operates within metabolic intermediate biosynthesis; acetyl-CoA biosynthesis; acetyl-CoA from acetate: step 1/2. Catalyzes the formation of acetyl phosphate from acetate and ATP. Can also catalyze the reverse reaction. The sequence is that of Acetate kinase from Caldanaerobacter subterraneus subsp. tengcongensis (strain DSM 15242 / JCM 11007 / NBRC 100824 / MB4) (Thermoanaerobacter tengcongensis).